The primary structure comprises 424 residues: Dihydroorotase (424 aa).

His58 and His60 together coordinate Zn(2+). Substrate-binding positions include 60 to 62 (HLR) and Asn92. Zn(2+) contacts are provided by Asp150, His177, and His230. A substrate-binding site is contributed by Asn276. Position 303 (Asp303) interacts with Zn(2+). The active site involves Asp303. Substrate is bound by residues His307 and 321–322 (FG).

The protein belongs to the metallo-dependent hydrolases superfamily. DHOase family. Class I DHOase subfamily. Zn(2+) is required as a cofactor.

It catalyses the reaction (S)-dihydroorotate + H2O = N-carbamoyl-L-aspartate + H(+). It participates in pyrimidine metabolism; UMP biosynthesis via de novo pathway; (S)-dihydroorotate from bicarbonate: step 3/3. Catalyzes the reversible cyclization of carbamoyl aspartate to dihydroorotate. The polypeptide is Dihydroorotase (Staphylococcus aureus (strain MRSA252)).